Reading from the N-terminus, the 136-residue chain is Small ribosomal subunit protein uS11 (136 aa).

This sequence belongs to the universal ribosomal protein uS11 family. Part of the 30S ribosomal subunit. Interacts with proteins S7 and S18. Binds to IF-3.

Functionally, located on the platform of the 30S subunit, it bridges several disparate RNA helices of the 16S rRNA. Forms part of the Shine-Dalgarno cleft in the 70S ribosome. The protein is Small ribosomal subunit protein uS11 of Leptospira borgpetersenii serovar Hardjo-bovis (strain JB197).